Consider the following 59-residue polypeptide: Small ribosomal subunit protein bS21 (59 aa).

Residues 40–59 form a disordered region; it reads KPSVKRKKKSEAARKRKSFR. A compositionally biased stretch (basic residues) spans 43-59; sequence VKRKKKSEAARKRKSFR.

Belongs to the bacterial ribosomal protein bS21 family.

The polypeptide is Small ribosomal subunit protein bS21 (Desulforamulus reducens (strain ATCC BAA-1160 / DSM 100696 / MI-1) (Desulfotomaculum reducens)).